Reading from the N-terminus, the 292-residue chain is Xanthine dehydrogenase FAD-binding subunit (292 aa).

The FAD-binding PCMH-type domain maps to 1-176 (MFDFASYHRA…VAFHFPPQPK (176 aa)). FAD is bound by residues 27–34 (KLLAGGTD), 109–113 (ATYGG), Ile165, and Phe184.

As to quaternary structure, heterotrimer of XdhA, XdhB and XdhC. The cofactor is FAD.

It catalyses the reaction xanthine + NAD(+) + H2O = urate + NADH + H(+). The catalysed reaction is hypoxanthine + NAD(+) + H2O = xanthine + NADH + H(+). The protein operates within purine metabolism; hypoxanthine degradation; urate from hypoxanthine: step 1/2. It functions in the pathway purine metabolism; hypoxanthine degradation; urate from hypoxanthine: step 2/2. In terms of biological role, presumed to be a dehydrogenase, but possibly an oxidase. Participates in limited purine salvage (requires aspartate) but does not support aerobic growth on purines as the sole carbon source (purine catabolism). This chain is Xanthine dehydrogenase FAD-binding subunit (xdhB), found in Escherichia coli O157:H7.